A 602-amino-acid polypeptide reads, in one-letter code: Proline--tRNA ligase (602 aa).

The protein belongs to the class-II aminoacyl-tRNA synthetase family. ProS type 1 subfamily. As to quaternary structure, homodimer.

Its subcellular location is the cytoplasm. The catalysed reaction is tRNA(Pro) + L-proline + ATP = L-prolyl-tRNA(Pro) + AMP + diphosphate. Catalyzes the attachment of proline to tRNA(Pro) in a two-step reaction: proline is first activated by ATP to form Pro-AMP and then transferred to the acceptor end of tRNA(Pro). As ProRS can inadvertently accommodate and process non-cognate amino acids such as alanine and cysteine, to avoid such errors it has two additional distinct editing activities against alanine. One activity is designated as 'pretransfer' editing and involves the tRNA(Pro)-independent hydrolysis of activated Ala-AMP. The other activity is designated 'posttransfer' editing and involves deacylation of mischarged Ala-tRNA(Pro). The misacylated Cys-tRNA(Pro) is not edited by ProRS. This is Proline--tRNA ligase from Thermosynechococcus vestitus (strain NIES-2133 / IAM M-273 / BP-1).